The chain runs to 203 residues: Ras-related protein RABG3b (203 aa).

Residue Gly15–Thr22 coordinates GTP. The Effector region signature appears at Tyr37 to Phe45. GTP-binding positions include Asp63–Gln67, Asn125–Asp128, and Ser158–Ala159. Residues Cys201 and Cys203 are each lipidated (S-geranylgeranyl cysteine). Cysteine methyl ester is present on Cys203.

Belongs to the small GTPase superfamily. Rab family. Interacts with VPS39. Expressed in xylem cells of inflorescence stems.

It is found in the cell membrane. In terms of biological role, intracellular vesicle trafficking and protein transport. Functions in autophagy. Involved in xylem and tracheary element differentiation. This Arabidopsis thaliana (Mouse-ear cress) protein is Ras-related protein RABG3b (RABG3B).